The sequence spans 260 residues: Spectinomycin 9-adenylyltransferase (260 aa).

The enzyme catalyses spectinomycin + ATP = 9-O-adenylylspectinomycin + diphosphate. Functionally, mediates bacterial resistance to the antibiotic spectinomycin but not streptomycin. This is Spectinomycin 9-adenylyltransferase (ant1) from Staphylococcus aureus (strain Mu50 / ATCC 700699).